The following is a 704-amino-acid chain: Polyribonucleotide nucleotidyltransferase (704 aa).

The Mg(2+) site is built by Asp488 and Asp494. The KH domain maps to 555 to 614 (PRITTIKINPEKIRDVIGKGGATIRALTEETGTTIELDDDGTVKIASSNGEATKEAIRRI). The S1 motif domain occupies 624–692 (GTVYNGKVVR…RQGRVRLSMK (69 aa)).

It belongs to the polyribonucleotide nucleotidyltransferase family. Component of the RNA degradosome, which is a multiprotein complex involved in RNA processing and mRNA degradation. It depends on Mg(2+) as a cofactor.

The protein localises to the cytoplasm. It carries out the reaction RNA(n+1) + phosphate = RNA(n) + a ribonucleoside 5'-diphosphate. Functionally, involved in mRNA degradation. Catalyzes the phosphorolysis of single-stranded polyribonucleotides processively in the 3'- to 5'-direction. This is Polyribonucleotide nucleotidyltransferase from Shewanella pealeana (strain ATCC 700345 / ANG-SQ1).